A 274-amino-acid chain; its full sequence is 3-methyl-2-oxobutanoate hydroxymethyltransferase (274 aa).

Mg(2+) is bound by residues Asp-49 and Asp-88. 3-methyl-2-oxobutanoate-binding positions include 49–50 (DS), Asp-88, and Lys-118. Glu-120 is a Mg(2+) binding site. Glu-187 functions as the Proton acceptor in the catalytic mechanism.

Belongs to the PanB family. Homodecamer; pentamer of dimers. Mg(2+) is required as a cofactor.

The protein resides in the cytoplasm. It catalyses the reaction 3-methyl-2-oxobutanoate + (6R)-5,10-methylene-5,6,7,8-tetrahydrofolate + H2O = 2-dehydropantoate + (6S)-5,6,7,8-tetrahydrofolate. The protein operates within cofactor biosynthesis; (R)-pantothenate biosynthesis; (R)-pantoate from 3-methyl-2-oxobutanoate: step 1/2. Its function is as follows. Catalyzes the reversible reaction in which hydroxymethyl group from 5,10-methylenetetrahydrofolate is transferred onto alpha-ketoisovalerate to form ketopantoate. The polypeptide is 3-methyl-2-oxobutanoate hydroxymethyltransferase (Rhodopseudomonas palustris (strain BisB18)).